A 599-amino-acid chain; its full sequence is Elongation factor 4 (599 aa).

In terms of domain architecture, tr-type G spans 2-184; the sequence is KNIRNFSIIA…RLVRDIPPPQ (183 aa). GTP-binding positions include 14–19 and 131–134; these read DHGKST and NKID.

The protein belongs to the TRAFAC class translation factor GTPase superfamily. Classic translation factor GTPase family. LepA subfamily.

Its subcellular location is the cell inner membrane. It catalyses the reaction GTP + H2O = GDP + phosphate + H(+). Functionally, required for accurate and efficient protein synthesis under certain stress conditions. May act as a fidelity factor of the translation reaction, by catalyzing a one-codon backward translocation of tRNAs on improperly translocated ribosomes. Back-translocation proceeds from a post-translocation (POST) complex to a pre-translocation (PRE) complex, thus giving elongation factor G a second chance to translocate the tRNAs correctly. Binds to ribosomes in a GTP-dependent manner. The chain is Elongation factor 4 from Salmonella paratyphi C (strain RKS4594).